Here is a 637-residue protein sequence, read N- to C-terminus: tRNA uridine 5-carboxymethylaminomethyl modification enzyme MnmG (637 aa).

14–19 (GAGHAG) provides a ligand contact to FAD. Position 279 to 293 (279 to 293 (GPRYCPSIEDKVVRF)) interacts with NAD(+).

This sequence belongs to the MnmG family. In terms of assembly, homodimer. Heterotetramer of two MnmE and two MnmG subunits. Requires FAD as cofactor.

The protein localises to the cytoplasm. Its function is as follows. NAD-binding protein involved in the addition of a carboxymethylaminomethyl (cmnm) group at the wobble position (U34) of certain tRNAs, forming tRNA-cmnm(5)s(2)U34. This Desulfitobacterium hafniense (strain Y51) protein is tRNA uridine 5-carboxymethylaminomethyl modification enzyme MnmG.